A 246-amino-acid polypeptide reads, in one-letter code: E3 ubiquitin-protein ligase MARCHF2 (246 aa).

The RING-CH-type zinc finger occupies 56–116 (DTPSDGPFCR…ELCHTEFAVE (61 aa)). The interval 56–116 (DTPSDGPFCR…ELCHTEFAVE (61 aa)) is required for inhibition of HIV-1 virus production and VSV G protein expression. Residues C64, C67, C80, C82, H90, C93, C106, and C109 each coordinate Zn(2+). Residues 121 to 246 (PLTEWLKDPG…LKKVAEETPV (126 aa)) form a required for interaction with IKBKG region. Helical transmembrane passes span 138–158 (LCCD…SGWL) and 175–195 (AVGL…WTLV).

As to quaternary structure, interacts with STX6; the interaction promotes MARCHF2-mediated ubiquitination and degradation of CFTR. Interacts with MARCHF3. Interacts with GOPC/CAL; the interaction leads to CFTR ubiquitination and degradation. Interacts with CFTR; the interaction leads to CFTR ubiqtuitination and degradation. Interacts (via PDZ domain) with DLG1 (via PDZ domains); the interaction leads to DLG1 ubiqtuitination and degradation. Interacts with ERGIC3. Interacts with ADRB2. Interacts with IKBKG/NEMO; during the late stages of macrophage viral and bacterial infection; the interaction leads to ubiquitination and degradation of IKBKG/NEMO. As to expression, broadly expressed.

Its subcellular location is the endoplasmic reticulum membrane. It is found in the lysosome membrane. It localises to the endosome membrane. The protein resides in the golgi apparatus membrane. The protein localises to the cytoplasm. Its subcellular location is the cell membrane. It carries out the reaction S-ubiquitinyl-[E2 ubiquitin-conjugating enzyme]-L-cysteine + [acceptor protein]-L-lysine = [E2 ubiquitin-conjugating enzyme]-L-cysteine + N(6)-ubiquitinyl-[acceptor protein]-L-lysine.. It participates in protein modification; protein ubiquitination. Its function is as follows. E3 ubiquitin-protein ligase that may mediate ubiquitination of TFRC and CD86, and promote their subsequent endocytosis and sorting to lysosomes via multivesicular bodies. E3 ubiquitin ligases accept ubiquitin from an E2 ubiquitin-conjugating enzyme in the form of a thioester and then directly transfer the ubiquitin to targeted substrates. Together with GOPC/CAL mediates the ubiquitination and lysosomal degradation of CFTR. Ubiquitinates and therefore mediates the degradation of DLG1. Regulates the intracellular trafficking and secretion of alpha1-antitrypsin/SERPINA1 and HP/haptoglobin via ubiquitination and degradation of the cargo receptor ERGIC3. Negatively regulates the antiviral and antibacterial immune response by repression of the NF-kB and type 1 IFN signaling pathways, via MARCHF2-mediated K48-linked polyubiquitination of IKBKG/NEMO, resulting in its proteasomal degradation. May be involved in endosomal trafficking through interaction with STX6. Functionally, (Microbial infection) Positively regulates the degradation of Vesicular stomatitis virus (VSV) G protein via the lysosomal degradation pathway. Represses HIV-1 viral production and may inhibit the translocation of HIV-1 env to the cell surface, resulting in decreased viral cell-cell transmission. This is E3 ubiquitin-protein ligase MARCHF2 from Homo sapiens (Human).